A 168-amino-acid chain; its full sequence is Peptide deformylase 2 (168 aa).

Residues C91 and H133 each coordinate Fe cation. The active site involves E134. H137 is a binding site for Fe cation.

Belongs to the polypeptide deformylase family. It depends on Fe(2+) as a cofactor.

It catalyses the reaction N-terminal N-formyl-L-methionyl-[peptide] + H2O = N-terminal L-methionyl-[peptide] + formate. Its function is as follows. Removes the formyl group from the N-terminal Met of newly synthesized proteins. Requires at least a dipeptide for an efficient rate of reaction. N-terminal L-methionine is a prerequisite for activity but the enzyme has broad specificity at other positions. This Vibrio vulnificus (strain CMCP6) protein is Peptide deformylase 2.